Reading from the N-terminus, the 182-residue chain is Peptidyl-tRNA hydrolase (182 aa).

Position 14 (Y14) interacts with tRNA. H19 serves as the catalytic Proton acceptor. F64, N66, and N112 together coordinate tRNA.

Belongs to the PTH family. As to quaternary structure, monomer.

The protein resides in the cytoplasm. The enzyme catalyses an N-acyl-L-alpha-aminoacyl-tRNA + H2O = an N-acyl-L-amino acid + a tRNA + H(+). Hydrolyzes ribosome-free peptidyl-tRNAs (with 1 or more amino acids incorporated), which drop off the ribosome during protein synthesis, or as a result of ribosome stalling. Functionally, catalyzes the release of premature peptidyl moieties from peptidyl-tRNA molecules trapped in stalled 50S ribosomal subunits, and thus maintains levels of free tRNAs and 50S ribosomes. This Wolbachia pipientis wMel protein is Peptidyl-tRNA hydrolase.